The primary structure comprises 263 residues: Phosphatidylglycerol--prolipoprotein diacylglyceryl transferase (263 aa).

Transmembrane regions (helical) follow at residues 15–35 (ISIH…VYLA), 52–72 (FILL…VIFQ), 83–103 (IFAI…GAAV), and 112–132 (AIAV…AQSI). Residue R134 coordinates a 1,2-diacyl-sn-glycero-3-phospho-(1'-sn-glycerol). 3 consecutive transmembrane segments (helical) span residues 170–190 (VPTF…ILGL), 200–220 (GDVT…IEGM), and 227–247 (FVGL…GAVL).

It belongs to the Lgt family.

It is found in the cell membrane. The catalysed reaction is L-cysteinyl-[prolipoprotein] + a 1,2-diacyl-sn-glycero-3-phospho-(1'-sn-glycerol) = an S-1,2-diacyl-sn-glyceryl-L-cysteinyl-[prolipoprotein] + sn-glycerol 1-phosphate + H(+). The protein operates within protein modification; lipoprotein biosynthesis (diacylglyceryl transfer). Functionally, catalyzes the transfer of the diacylglyceryl group from phosphatidylglycerol to the sulfhydryl group of the N-terminal cysteine of a prolipoprotein, the first step in the formation of mature lipoproteins. This chain is Phosphatidylglycerol--prolipoprotein diacylglyceryl transferase, found in Streptococcus thermophilus (strain CNRZ 1066).